Here is a 322-residue protein sequence, read N- to C-terminus: NADH-quinone oxidoreductase subunit H (322 aa).

8 helical membrane passes run 12–32 (VGKALIVLVGIVGAGAFMSFI), 79–99 (IFILAPIIAFTAFILAFAVVP), 111–131 (VGLLYILAIAGLAVYAVLFAG), 151–171 (LSYEVFLGLSLMGIVIQTGSF), 183–203 (LWNVVPQILGFITFLFAGVAV), 234–254 (FFVGEYIGIVLISSLIVTLFF), 262–282 (LPPFIWFALKTACFMVFFILL), and 301–321 (VCLPLTLVNMLITGAVVLINV).

Belongs to the complex I subunit 1 family. As to quaternary structure, NDH-1 is composed of 14 different subunits. Subunits NuoA, H, J, K, L, M, N constitute the membrane sector of the complex.

It is found in the cell inner membrane. The enzyme catalyses a quinone + NADH + 5 H(+)(in) = a quinol + NAD(+) + 4 H(+)(out). Functionally, NDH-1 shuttles electrons from NADH, via FMN and iron-sulfur (Fe-S) centers, to quinones in the respiratory chain. The immediate electron acceptor for the enzyme in this species is believed to be ubiquinone. Couples the redox reaction to proton translocation (for every two electrons transferred, four hydrogen ions are translocated across the cytoplasmic membrane), and thus conserves the redox energy in a proton gradient. This subunit may bind ubiquinone. The chain is NADH-quinone oxidoreductase subunit H from Aeromonas salmonicida (strain A449).